Reading from the N-terminus, the 633-residue chain is DNA mismatch repair protein MutL (633 aa).

This sequence belongs to the DNA mismatch repair MutL/HexB family.

Functionally, this protein is involved in the repair of mismatches in DNA. It is required for dam-dependent methyl-directed DNA mismatch repair. May act as a 'molecular matchmaker', a protein that promotes the formation of a stable complex between two or more DNA-binding proteins in an ATP-dependent manner without itself being part of a final effector complex. This chain is DNA mismatch repair protein MutL, found in Bacillus pumilus (strain SAFR-032).